We begin with the raw amino-acid sequence, 360 residues long: UDP-3-O-acylglucosamine N-acyltransferase (360 aa).

His256 serves as the catalytic Proton acceptor. Residues 341–360 are disordered; the sequence is EGSGAETAARPDDDRDEGRG. Basic and acidic residues predominate over residues 349–360; it reads ARPDDDRDEGRG.

Belongs to the transferase hexapeptide repeat family. LpxD subfamily. As to quaternary structure, homotrimer.

It catalyses the reaction a UDP-3-O-[(3R)-3-hydroxyacyl]-alpha-D-glucosamine + a (3R)-hydroxyacyl-[ACP] = a UDP-2-N,3-O-bis[(3R)-3-hydroxyacyl]-alpha-D-glucosamine + holo-[ACP] + H(+). It functions in the pathway bacterial outer membrane biogenesis; LPS lipid A biosynthesis. Functionally, catalyzes the N-acylation of UDP-3-O-acylglucosamine using 3-hydroxyacyl-ACP as the acyl donor. Is involved in the biosynthesis of lipid A, a phosphorylated glycolipid that anchors the lipopolysaccharide to the outer membrane of the cell. The polypeptide is UDP-3-O-acylglucosamine N-acyltransferase (Rhodopseudomonas palustris (strain TIE-1)).